Consider the following 275-residue polypeptide: Putative carbamate hydrolase RutD (275 aa).

Belongs to the AB hydrolase superfamily. Hydrolase RutD family.

It carries out the reaction carbamate + 2 H(+) = NH4(+) + CO2. In terms of biological role, involved in pyrimidine catabolism. May facilitate the hydrolysis of carbamate, a reaction that can also occur spontaneously. The polypeptide is Putative carbamate hydrolase RutD (Escherichia coli O6:H1 (strain CFT073 / ATCC 700928 / UPEC)).